The primary structure comprises 262 residues: Pyridoxine 5'-phosphate synthase (262 aa).

N6 contributes to the 3-amino-2-oxopropyl phosphate binding site. 8-9 (DH) contacts 1-deoxy-D-xylulose 5-phosphate. Residue R17 coordinates 3-amino-2-oxopropyl phosphate. H43 functions as the Proton acceptor in the catalytic mechanism. Positions 45 and 50 each coordinate 1-deoxy-D-xylulose 5-phosphate. E70 functions as the Proton acceptor in the catalytic mechanism. 1-deoxy-D-xylulose 5-phosphate is bound at residue T102. H215 serves as the catalytic Proton donor. Residues G216 and 237–238 (GH) each bind 3-amino-2-oxopropyl phosphate.

The protein belongs to the PNP synthase family. As to quaternary structure, homooctamer; tetramer of dimers.

It is found in the cytoplasm. It catalyses the reaction 3-amino-2-oxopropyl phosphate + 1-deoxy-D-xylulose 5-phosphate = pyridoxine 5'-phosphate + phosphate + 2 H2O + H(+). Its pathway is cofactor biosynthesis; pyridoxine 5'-phosphate biosynthesis; pyridoxine 5'-phosphate from D-erythrose 4-phosphate: step 5/5. In terms of biological role, catalyzes the complicated ring closure reaction between the two acyclic compounds 1-deoxy-D-xylulose-5-phosphate (DXP) and 3-amino-2-oxopropyl phosphate (1-amino-acetone-3-phosphate or AAP) to form pyridoxine 5'-phosphate (PNP) and inorganic phosphate. The sequence is that of Pyridoxine 5'-phosphate synthase from Helicobacter acinonychis (strain Sheeba).